The sequence spans 189 residues: GMP synthase [glutamine-hydrolyzing] subunit A (189 aa).

The 185-residue stretch at 5–189 (KIIVINNYGQ…MNFFKVCEDY (185 aa)) folds into the Glutamine amidotransferase type-1 domain. Cysteine 79 acts as the Nucleophile in catalysis. Catalysis depends on residues histidine 166 and glutamate 168.

Heterodimer composed of a glutamine amidotransferase subunit (A) and a GMP-binding subunit (B).

It catalyses the reaction XMP + L-glutamine + ATP + H2O = GMP + L-glutamate + AMP + diphosphate + 2 H(+). The protein operates within purine metabolism; GMP biosynthesis; GMP from XMP (L-Gln route): step 1/1. Catalyzes the synthesis of GMP from XMP. The sequence is that of GMP synthase [glutamine-hydrolyzing] subunit A from Methanococcoides burtonii (strain DSM 6242 / NBRC 107633 / OCM 468 / ACE-M).